A 254-amino-acid chain; its full sequence is Triosephosphate isomerase (254 aa).

9–11 (NWK) contacts substrate. The Electrophile role is filled by histidine 96. The Proton acceptor role is filled by glutamate 169. Residues glycine 175, serine 215, and 236–237 (GG) each bind substrate.

It belongs to the triosephosphate isomerase family. As to quaternary structure, homodimer.

Its subcellular location is the cytoplasm. The catalysed reaction is D-glyceraldehyde 3-phosphate = dihydroxyacetone phosphate. It functions in the pathway carbohydrate biosynthesis; gluconeogenesis. It participates in carbohydrate degradation; glycolysis; D-glyceraldehyde 3-phosphate from glycerone phosphate: step 1/1. Involved in the gluconeogenesis. Catalyzes stereospecifically the conversion of dihydroxyacetone phosphate (DHAP) to D-glyceraldehyde-3-phosphate (G3P). This is Triosephosphate isomerase from Borrelia hermsii (strain HS1 / DAH).